Reading from the N-terminus, the 379-residue chain is Glucose-1-phosphate adenylyltransferase (379 aa).

Alpha-D-glucose 1-phosphate is bound by residues G164, 179–180 (EK), and S190.

Belongs to the bacterial/plant glucose-1-phosphate adenylyltransferase family. As to quaternary structure, homotetramer.

It catalyses the reaction alpha-D-glucose 1-phosphate + ATP + H(+) = ADP-alpha-D-glucose + diphosphate. It functions in the pathway glycan biosynthesis; glycogen biosynthesis. Functionally, involved in the biosynthesis of ADP-glucose, a building block required for the elongation reactions to produce glycogen. Catalyzes the reaction between ATP and alpha-D-glucose 1-phosphate (G1P) to produce pyrophosphate and ADP-Glc. The sequence is that of Glucose-1-phosphate adenylyltransferase from Streptococcus agalactiae serotype III (strain NEM316).